The chain runs to 932 residues: DNA mismatch repair protein MutS (932 aa).

An ATP-binding site is contributed by 615 to 622; that stretch reads GPNMAGKS.

The protein belongs to the DNA mismatch repair MutS family.

Functionally, this protein is involved in the repair of mismatches in DNA. It is possible that it carries out the mismatch recognition step. This protein has a weak ATPase activity. This is DNA mismatch repair protein MutS from Clostridium botulinum (strain 657 / Type Ba4).